The sequence spans 131 residues: MVSALYAVLSALLLMKFSFDVVRLRMQYRVAYGDGGFSELQSAIRIHGNAVEYIPIAIVLMLFMEMNGAETWMVHICGIVLLAGRLMHYYGFHHRLFRWRRSGMSATWCALLLMVLANLWYMPWELVFSLR.

The Cytoplasmic portion of the chain corresponds to 1–107 (MVSALYAVLS…RWRRSGMSAT (107 aa)). A helical membrane pass occupies residues 108-128 (WCALLLMVLANLWYMPWELVF). Topologically, residues 129–131 (SLR) are periplasmic.

The protein resides in the cell inner membrane. The chain is Inner membrane protein YecN (yecN) from Escherichia coli O6:H1 (strain CFT073 / ATCC 700928 / UPEC).